The sequence spans 633 residues: DNA repair protein XRCC1 (633 aa).

At S140 the chain carries Phosphoserine. K176 is covalently cross-linked (Glycyl lysine isopeptide (Lys-Gly) (interchain with G-Cter in SUMO1); alternate). K176 is covalently cross-linked (Glycyl lysine isopeptide (Lys-Gly) (interchain with G-Cter in SUMO2); alternate). Residue T198 is modified to Phosphothreonine. Phosphoserine is present on S199. T202 carries the phosphothreonine modification. 3 positions are modified to phosphoserine: S204, S226, and S241. Positions 221–231 (AASSASPVSRA) are enriched in low complexity. A disordered region spans residues 221 to 313 (AASSASPVSR…TEPRRPRAGP (93 aa)). Residues 240-257 (ESPKGKRKLDLNQEEKKT) are compositionally biased toward basic and acidic residues. Position 257 is a phosphothreonine (T257). Phosphoserine is present on residues S259 and S266. Low complexity predominate over residues 277 to 291 (APTRTPATAPVPARA). Position 281 is a phosphothreonine (T281). Residues 299-313 (PRGEGTEPRRPRAGP) are compositionally biased toward basic and acidic residues. The BRCT 1 domain occupies 315-403 (ELGKILQGVV…RRLPSQRYLM (89 aa)). Position 371 is a phosphoserine; by PRKDC (S371). Disordered stretches follow at residues 400 to 462 (RYLM…AASP), 471 to 490 (EGVQ…DTED), and 498 to 536 (QKEH…DLPV). 4 positions are modified to phosphoserine: S408, S409, S410, and S421. Over residues 427 to 443 (KLPQKQPQTKTKPTQAA) the composition is skewed to low complexity. Phosphoserine occurs at positions 446 and 447. Phosphothreonine is present on residues T453 and T457. A phosphoserine mark is found at S461 and S485. Residues 481 to 490 (GAEDSGDTED) show a composition bias toward acidic residues. A Phosphothreonine modification is found at T488. Residue S518 is modified to Phosphoserine. 2 positions are modified to phosphothreonine: T519 and T523. Residues 538–629 (ELPDFFQGKH…KLLPHQLYGV (92 aa)) form the BRCT 2 domain.

As to quaternary structure, homodimer. Interacts with polynucleotide kinase (PNK), DNA polymerase-beta (POLB) and DNA ligase III (LIG3). Interacts with APTX and APLF. Interacts with APEX1; the interaction is induced by SIRT1 and increases with the acetylated form of APEX1. Interacts with (poly-ADP-ribosylated) PARP1. In terms of processing, phosphorylation of Ser-371 causes dimer dissociation. Phosphorylation by CK2 promotes interaction with APTX and APLF. Sumoylated. In terms of tissue distribution, expressed in fibroblasts, retinal pigmented epithelial cells and lymphoblastoid cells (at protein level).

It is found in the nucleus. The protein resides in the chromosome. Its function is as follows. Scaffold protein involved in DNA single-strand break repair by mediating the assembly of DNA break repair protein complexes. Negatively regulates ADP-ribosyltransferase activity of PARP1 during base-excision repair in order to prevent excessive PARP1 activity. Recognizes and binds poly-ADP-ribose chains: specifically binds auto-poly-ADP-ribosylated PARP1, limiting its activity. The sequence is that of DNA repair protein XRCC1 from Homo sapiens (Human).